The sequence spans 1073 residues: MPKRTDIKSILILGAGPIVIGQACEFDYSGAQACKALREEGYRVILVNSNPATIMTDPEMADATYIEPIHWEVVRKIIEKERPDAVLPTMGGQTALNCALELERQGVLEEFGVTMIGATADAIDKAEDRRRFDVAMKKIGLETARSGIAHTMEEALAVAADVGFPCIIRPSFTMGGSGGGIAYNREEFEEICARGLDLSPTKELLIDESLIGWKEYEMEVVRDKNDNCIIVCSIENFDAMGIHTGDSITVAPAQTLTDKEYQIMRNASMAVLREIGVETGGSNVQFAVNPKNGRLIVIEMNPRVSRSSALASKATGFPIAKVAAKLAVGYTLDELMNDITGGRTPASFEPSIDYVVTKIPRFNFEKFAGANDRLTTQMKSVGEVMAIGRTQQESLQKALRGLEVGATGFDPKVSLDDPEALTKIRRELKDAGAERIWYIADAFRAGLSVDGVFNLTNIDRWFLVQIEELVRLEEKVAEVGITGLNAEFLRQLKRKGFADARLAKLAGVREAEIRKLRDQYDLHPVYKRVDTCAAEFATDTAYMYSTYEEECEANPSTDREKIMVLGGGPNRIGQGIEFDYCCVHASLALREDGYETIMVNCNPETVSTDYDTSDRLYFEPVTLEDVLEIVRIEKPKGVIVQYGGQTPLKLARALEAAGVPVIGTSPDAIDRAEDRERFQHAVDRLKLKQPANATVTAIEMAVEKAKEIGYPLVVRPSYVLGGRAMEIVYDEADLRRYFQTAVSVSNDAPVLLDHFLDDAVEVDVDAICDGEMVLIGGIMEHIEQAGVHSGDSACSLPAYTLSQEIQDVMRQQVQKLAFELQVRGLMNVQFAVKNNEVYLIEVNPRAARTVPFVSKATGVPLAKVAARVMAGKSLAEQGVTKEVIPPYYSVKEVVLPFNKFPGVDPLLGPEMRSTGEVMGVGRTFAEAFAKAQLGSNSTMKKHGRALLSVREGDKERVVDLAAKLLKQGFELDATHGTAIVLGEAGINPRLVNKVHEGRPHIQDRIKNGEYTYIINTTSGRRAIEDSRVIRRSALQYKVHYDTTLNGGFATAMALNADATEKVISVQEMHAQIK.

The tract at residues 2-403 (PKRTDIKSIL…SLQKALRGLE (402 aa)) is carboxyphosphate synthetic domain. ATP-binding residues include Arg-129, Arg-169, Gly-175, Gly-176, Glu-208, Leu-210, Glu-215, Gly-241, Ile-242, His-243, Gln-285, and Glu-299. One can recognise an ATP-grasp 1 domain in the interval 133-328 (DVAMKKIGLE…IAKVAAKLAV (196 aa)). Residues Gln-285, Glu-299, and Asn-301 each contribute to the Mg(2+) site. Mn(2+) is bound by residues Gln-285, Glu-299, and Asn-301. The oligomerization domain stretch occupies residues 404-553 (VGATGFDPKV…YSTYEEECEA (150 aa)). Positions 554–936 (NPSTDREKIM…AFAKAQLGSN (383 aa)) are carbamoyl phosphate synthetic domain. An ATP-grasp 2 domain is found at 679–870 (QHAVDRLKLK…LAKVAARVMA (192 aa)). 10 residues coordinate ATP: Arg-715, His-754, Leu-756, Glu-761, Gly-786, Val-787, His-788, Ser-789, Gln-829, and Glu-841. Residues Gln-829, Glu-841, and Asn-843 each contribute to the Mg(2+) site. Residues Gln-829, Glu-841, and Asn-843 each coordinate Mn(2+). An MGS-like domain is found at 937–1073 (STMKKHGRAL…SVQEMHAQIK (137 aa)). The segment at 937–1073 (STMKKHGRAL…SVQEMHAQIK (137 aa)) is allosteric domain.

The protein belongs to the CarB family. Composed of two chains; the small (or glutamine) chain promotes the hydrolysis of glutamine to ammonia, which is used by the large (or ammonia) chain to synthesize carbamoyl phosphate. Tetramer of heterodimers (alpha,beta)4. Mg(2+) serves as cofactor. Mn(2+) is required as a cofactor.

The catalysed reaction is hydrogencarbonate + L-glutamine + 2 ATP + H2O = carbamoyl phosphate + L-glutamate + 2 ADP + phosphate + 2 H(+). It carries out the reaction hydrogencarbonate + NH4(+) + 2 ATP = carbamoyl phosphate + 2 ADP + phosphate + 2 H(+). It functions in the pathway amino-acid biosynthesis; L-arginine biosynthesis; carbamoyl phosphate from bicarbonate: step 1/1. The protein operates within pyrimidine metabolism; UMP biosynthesis via de novo pathway; (S)-dihydroorotate from bicarbonate: step 1/3. Its function is as follows. Large subunit of the glutamine-dependent carbamoyl phosphate synthetase (CPSase). CPSase catalyzes the formation of carbamoyl phosphate from the ammonia moiety of glutamine, carbonate, and phosphate donated by ATP, constituting the first step of 2 biosynthetic pathways, one leading to arginine and/or urea and the other to pyrimidine nucleotides. The large subunit (synthetase) binds the substrates ammonia (free or transferred from glutamine from the small subunit), hydrogencarbonate and ATP and carries out an ATP-coupled ligase reaction, activating hydrogencarbonate by forming carboxy phosphate which reacts with ammonia to form carbamoyl phosphate. The polypeptide is Carbamoyl phosphate synthase large chain (Escherichia coli O157:H7).